The sequence spans 404 residues: Propionate kinase (404 aa).

The protein belongs to the acetokinase family. PduW subfamily.

The protein resides in the cytoplasm. It catalyses the reaction propanoate + ATP = propanoyl phosphate + ADP. It participates in polyol metabolism; 1,2-propanediol degradation. Works with phosphate acetyltransferase (pta) to capture exogenous propionate and regenerate propionyl-CoA during degradation of 1,2-propanediol (1,2-PD). In Klebsiella pneumoniae subsp. pneumoniae (strain ATCC 700721 / MGH 78578), this protein is Propionate kinase.